Here is a 363-residue protein sequence, read N- to C-terminus: Chorismate synthase (363 aa).

NADP(+)-binding residues include Arg48 and Arg54. Residues Arg125 to Ser127, Asn238 to Ala239, Gly278, Lys293 to Ser297, and Arg319 contribute to the FMN site.

Belongs to the chorismate synthase family. As to quaternary structure, homotetramer. Requires FMNH2 as cofactor.

It carries out the reaction 5-O-(1-carboxyvinyl)-3-phosphoshikimate = chorismate + phosphate. It participates in metabolic intermediate biosynthesis; chorismate biosynthesis; chorismate from D-erythrose 4-phosphate and phosphoenolpyruvate: step 7/7. Functionally, catalyzes the anti-1,4-elimination of the C-3 phosphate and the C-6 proR hydrogen from 5-enolpyruvylshikimate-3-phosphate (EPSP) to yield chorismate, which is the branch point compound that serves as the starting substrate for the three terminal pathways of aromatic amino acid biosynthesis. This reaction introduces a second double bond into the aromatic ring system. In Acidithiobacillus ferrooxidans (strain ATCC 23270 / DSM 14882 / CIP 104768 / NCIMB 8455) (Ferrobacillus ferrooxidans (strain ATCC 23270)), this protein is Chorismate synthase.